We begin with the raw amino-acid sequence, 573 residues long: Solute carrier family 41 member 2 (573 aa).

At 1 to 162 (MTNCKGRSTI…KESSSIMALQ (162 aa)) the chain is on the extracellular side. A helical transmembrane segment spans residues 163 to 183 (ILVPFLLAGFGTVTAGMVLDI). Over 184–195 (VQHWDVFKNVTE) the chain is Cytoplasmic. The helical transmembrane segment at 196 to 216 (VFILVPALLGLKGNLEMTLAS) threads the bilayer. The Extracellular segment spans residues 217-245 (RLSTAVNIGKMDSPIEKWNLIIGNLALKQ). The chain crosses the membrane as a helical span at residues 246–266 (VQATVVGFLAAVAAVILGWIP). Over 267-282 (EGKYSFSHSILLCSSS) the chain is Cytoplasmic. A helical membrane pass occupies residues 283 to 303 (VATAFIASLLQGIIMVGVIVG). Residues 304-313 (SKKTGINPDN) are Extracellular-facing. The helical transmembrane segment at 314-334 (VATPIAASFGDLITLAILAWI) threads the bilayer. Residues 335–347 (SQGLYTCLETYYY) lie on the Cytoplasmic side of the membrane. A helical transmembrane segment spans residues 348–368 (VSPLVGAFFLALTPMGIVIAA). Residues 369–376 (KHPATRTV) are Extracellular-facing. Residues 377 to 397 (LHSGWEPVITAMIISSIGGLI) form a helical membrane-spanning segment. Residues 398–406 (LDTTVSDPN) lie on the Cytoplasmic side of the membrane. A helical transmembrane segment spans residues 407 to 427 (LVGIVVYTPVINGIGGNLVAI). Over 428 to 469 (QASRISTYLHLHSIPGELPEEAKGCYYPCRTYYGTGVNNKSA) the chain is Extracellular. Residues 470–490 (QVLLLLVIPGHLIFLYTIHLM) form a helical membrane-spanning segment. At 491-499 (KSGHTSLTP) the chain is on the cytoplasmic side. Residues 500–520 (IFIAVYLFAALLQVFTLLWIA) form a helical membrane-spanning segment. Residues 521-543 (DWMVHHFWKKGKDPDSFSIPYLT) lie on the Extracellular side of the membrane. The helical transmembrane segment at 544–564 (ALGDLLGTALLAVGFHFLWLI) threads the bilayer. Over 565 to 573 (GDRDGDVGD) the chain is Cytoplasmic.

This sequence belongs to the SLC41A transporter family.

It localises to the cell membrane. It catalyses the reaction Mg(2+)(in) = Mg(2+)(out). The enzyme catalyses Mn(2+)(in) = Mn(2+)(out). It carries out the reaction Co(2+)(in) = Co(2+)(out). The catalysed reaction is Ni(2+)(in) = Ni(2+)(out). It catalyses the reaction Fe(2+)(in) = Fe(2+)(out). Acts as a plasma-membrane magnesium transporter. Can also mediate the transport of other divalent metal cations in an order of Ba(2+) &gt; Ni(2+) &gt; Co(2+) &gt; Fe(2+) &gt; Mn(2+). The protein is Solute carrier family 41 member 2 (SLC41A2) of Gallus gallus (Chicken).